A 244-amino-acid polypeptide reads, in one-letter code: Ubiquinone/menaquinone biosynthesis C-methyltransferase UbiE (244 aa).

S-adenosyl-L-methionine is bound by residues Thr70, Asp91, and 117–118; that span reads DA.

Belongs to the class I-like SAM-binding methyltransferase superfamily. MenG/UbiE family.

It catalyses the reaction a 2-demethylmenaquinol + S-adenosyl-L-methionine = a menaquinol + S-adenosyl-L-homocysteine + H(+). The catalysed reaction is a 2-methoxy-6-(all-trans-polyprenyl)benzene-1,4-diol + S-adenosyl-L-methionine = a 5-methoxy-2-methyl-3-(all-trans-polyprenyl)benzene-1,4-diol + S-adenosyl-L-homocysteine + H(+). The protein operates within quinol/quinone metabolism; menaquinone biosynthesis; menaquinol from 1,4-dihydroxy-2-naphthoate: step 2/2. It functions in the pathway cofactor biosynthesis; ubiquinone biosynthesis. In terms of biological role, methyltransferase required for the conversion of demethylmenaquinol (DMKH2) to menaquinol (MKH2) and the conversion of 2-polyprenyl-6-methoxy-1,4-benzoquinol (DDMQH2) to 2-polyprenyl-3-methyl-6-methoxy-1,4-benzoquinol (DMQH2). The chain is Ubiquinone/menaquinone biosynthesis C-methyltransferase UbiE from Laribacter hongkongensis (strain HLHK9).